A 371-amino-acid polypeptide reads, in one-letter code: Vasculin (371 aa).

It belongs to the vasculin family.

The protein resides in the nucleus. Its function is as follows. Functions as a GC-rich promoter-specific transactivating transcription factor. The sequence is that of Vasculin (gpbp1) from Xenopus laevis (African clawed frog).